Reading from the N-terminus, the 56-residue chain is Large ribosomal subunit protein bL32 (56 aa).

The span at 1-16 (MAVQKNRKTRSKRGMR) shows a compositional bias: basic residues. Residues 1–37 (MAVQKNRKTRSKRGMRRSHDALGTATMSVDSTSGETH) are disordered. The segment covering 25-35 (ATMSVDSTSGE) has biased composition (polar residues).

The protein belongs to the bacterial ribosomal protein bL32 family.

This chain is Large ribosomal subunit protein bL32, found in Pseudoalteromonas atlantica (strain T6c / ATCC BAA-1087).